A 139-amino-acid chain; its full sequence is ATP synthase epsilon chain 2 (139 aa).

Belongs to the ATPase epsilon chain family. F-type ATPases have 2 components, CF(1) - the catalytic core - and CF(0) - the membrane proton channel. CF(1) has five subunits: alpha(3), beta(3), gamma(1), delta(1), epsilon(1). CF(0) has three main subunits: a, b and c.

The protein resides in the cell inner membrane. Functionally, produces ATP from ADP in the presence of a proton gradient across the membrane. This is ATP synthase epsilon chain 2 from Paraburkholderia xenovorans (strain LB400).